We begin with the raw amino-acid sequence, 113 residues long: Integration host factor subunit alpha (113 aa).

The disordered stretch occupies residues 59–80 (GNFQVRDKPPRPGRNPKTGETI).

It belongs to the bacterial histone-like protein family. As to quaternary structure, heterodimer of an alpha and a beta chain.

Functionally, this protein is one of the two subunits of integration host factor, a specific DNA-binding protein that functions in genetic recombination as well as in transcriptional and translational control. The polypeptide is Integration host factor subunit alpha (Bordetella bronchiseptica (strain ATCC BAA-588 / NCTC 13252 / RB50) (Alcaligenes bronchisepticus)).